Consider the following 104-residue polypeptide: Replication restart protein PriB (104 aa).

An SSB domain is found at M1–D101.

It belongs to the PriB family. As to quaternary structure, homodimer. Interacts with PriA and DnaT. Component of the replication restart primosome. Primosome assembly occurs via a 'hand-off' mechanism. PriA binds to replication forks, subsequently PriB then DnaT bind; DnaT then displaces ssDNA to generate the helicase loading substrate.

Functionally, involved in the restart of stalled replication forks, which reloads the replicative helicase on sites other than the origin of replication; the PriA-PriB pathway is the major replication restart pathway. During primosome assembly it facilitates complex formation between PriA and DnaT on DNA; stabilizes PriA on DNA. Stimulates the DNA unwinding activity of PriA helicase. The chain is Replication restart protein PriB from Citrobacter koseri (strain ATCC BAA-895 / CDC 4225-83 / SGSC4696).